A 195-amino-acid chain; its full sequence is PRELI domain containing protein 3B (195 aa).

In terms of domain architecture, PRELI/MSF1 spans 1 to 172 (MKIWTSEHVF…VIHKLNAEIE (172 aa)). Residues serine 46 and serine 51 each carry the phosphoserine modification.

The protein belongs to the slowmo family.

The protein is PRELI domain containing protein 3B (PRELID3B) of Cricetulus griseus (Chinese hamster).